The primary structure comprises 384 residues: Bacterial ceramide synthase (384 aa).

The protein localises to the cytoplasm. The catalysed reaction is 3-oxosphinganine + a fatty acyl-CoA = N-acyl-3-oxosphinganine + CoA + H(+). It carries out the reaction 3-oxosphinganine + tetradecanoyl-CoA = N-tetradecanoyl-3-oxosphinganine + CoA + H(+). The enzyme catalyses 3-oxosphinganine + hexadecanoyl-CoA = N-hexadecanoyl-3-oxosphinganine + CoA + H(+). It catalyses the reaction 3-oxosphinganine + (9Z)-hexadecenoyl-CoA = N-(9Z-hexadecenoyl)-3-oxosphinganine + CoA + H(+). The catalysed reaction is 3-oxosphinganine + octanoyl-CoA = N-octanoyl-3-oxosphinganine + CoA + H(+). It carries out the reaction 3-oxosphinganine + decanoyl-CoA = N-decanoyl-3-oxosphinganine + CoA + H(+). The enzyme catalyses 3-oxosphinganine + dodecanoyl-CoA = N-dodecanoyl-3-oxosphinganine + CoA + H(+). It catalyses the reaction 3-oxosphinganine + octadecanoyl-CoA = N-octadecanoyl-3-oxosphinganine + CoA + H(+). The catalysed reaction is 3-oxosphinganine + eicosanoyl-CoA = N-eicosanoyl-3-oxosphinganine + CoA + H(+). It carries out the reaction 3-oxosphinganine + docosanoyl-CoA = N-docosanoyl-3-ketodihydrosphingosine + CoA + H(+). The enzyme catalyses 3-oxosphinganine + tetracosanoyl-CoA = N-tetracosanoyl-3-oxosphinganine + CoA + H(+). It participates in lipid metabolism; sphingolipid metabolism. In terms of biological role, involved in de novo bacterial ceramide synthesis. Catalyzes the condensation of 3-oxosphinganine with an acyl-CoA to generate oxidized ceramides. Can use acyl-CoA substrates ranging from C8 to C24, with highest in vitro activity with C14 and very little activity with acyl-CoA thioesters of 18 carbons or longer. May have a preference for monounsaturated acyl-CoA substrates, as it has a threefold greater preference for C16:1-CoA over C16:0-CoA as a substrate in vitro. The sequence is that of Bacterial ceramide synthase from Caulobacter vibrioides (strain NA1000 / CB15N) (Caulobacter crescentus).